We begin with the raw amino-acid sequence, 244 residues long: tRNA (guanine-N(1)-)-methyltransferase (244 aa).

S-adenosyl-L-methionine-binding positions include glycine 112 and 131–136 (IGDFIV).

The protein belongs to the RNA methyltransferase TrmD family. As to quaternary structure, homodimer.

Its subcellular location is the cytoplasm. It catalyses the reaction guanosine(37) in tRNA + S-adenosyl-L-methionine = N(1)-methylguanosine(37) in tRNA + S-adenosyl-L-homocysteine + H(+). In terms of biological role, specifically methylates guanosine-37 in various tRNAs. The polypeptide is tRNA (guanine-N(1)-)-methyltransferase (Clostridium kluyveri (strain NBRC 12016)).